The following is a 338-amino-acid chain: Glyceraldehyde-3-phosphate dehydrogenase (338 aa).

Residues 13 to 14 (RI), Asp35, and Arg80 contribute to the NAD(+) site. Residues 151 to 153 (SCT), Thr182, 211 to 212 (TG), and Arg234 contribute to the D-glyceraldehyde 3-phosphate site. The active-site Nucleophile is the Cys152. Asn316 serves as a coordination point for NAD(+).

This sequence belongs to the glyceraldehyde-3-phosphate dehydrogenase family. As to quaternary structure, homotetramer.

Its subcellular location is the cytoplasm. The enzyme catalyses D-glyceraldehyde 3-phosphate + phosphate + NAD(+) = (2R)-3-phospho-glyceroyl phosphate + NADH + H(+). The protein operates within carbohydrate degradation; glycolysis; pyruvate from D-glyceraldehyde 3-phosphate: step 1/5. This chain is Glyceraldehyde-3-phosphate dehydrogenase (GPD), found in Sclerotinia sclerotiorum (White mold).